Here is a 48-residue protein sequence, read N- to C-terminus: Large ribosomal subunit protein bL33B (48 aa).

Belongs to the bacterial ribosomal protein bL33 family.

This chain is Large ribosomal subunit protein bL33B, found in Lactococcus lactis subsp. cremoris (strain MG1363).